The chain runs to 151 residues: Transcription antitermination protein NusB (151 aa).

This sequence belongs to the NusB family.

Its function is as follows. Involved in transcription antitermination. Required for transcription of ribosomal RNA (rRNA) genes. Binds specifically to the boxA antiterminator sequence of the ribosomal RNA (rrn) operons. The chain is Transcription antitermination protein NusB from Hamiltonella defensa subsp. Acyrthosiphon pisum (strain 5AT).